Here is a 50-residue protein sequence, read N- to C-terminus: Peroxiredoxin-6 (50 aa).

The region spanning 1–50 (DFTPVCTTELGRLAPEFAKRVVFIFGPDKKLKLSILYPATTGRNFDEILR) is the Thioredoxin domain. Residue Thr3 is modified to Phosphothreonine. The active-site Cysteine sulfenic acid (-SOH) intermediate; for peroxidase activity is Cys6. At Lys19 the chain carries N6-acetyllysine. Asp28 acts as the For phospholipase activity in catalysis.

Belongs to the peroxiredoxin family. Prx6 subfamily. In terms of assembly, homodimer. Interacts with GSTP1; mediates PRDX6 glutathionylation and regeneration. Interacts with APEX1. Interacts with STH. May interact with FAM168B. May interact with HTR2A. Post-translationally, irreversibly inactivated by overoxidation of Cys-6 to sulfinic acid (Cys-SO(2)H) and sulfonic acid (Cys-SO(3)H) forms upon oxidative stress. Phosphorylation at Thr-177 by MAP kinases increases the phospholipase activity of the enzyme. The phosphorylated form exhibits a greater lysophosphatidylcholine acyltransferase activity compared to the non-phosphorylated form.

The protein localises to the cytoplasm. Its subcellular location is the lysosome. It catalyses the reaction a hydroperoxide + 2 glutathione = an alcohol + glutathione disulfide + H2O. The catalysed reaction is a 1,2-diacyl-sn-glycero-3-phosphocholine + H2O = a 1-acyl-sn-glycero-3-phosphocholine + a fatty acid + H(+). It carries out the reaction a 1-acyl-sn-glycero-3-phosphocholine + an acyl-CoA = a 1,2-diacyl-sn-glycero-3-phosphocholine + CoA. The enzyme catalyses 1-hexadecanoyl-sn-glycero-3-phosphocholine + hexadecanoyl-CoA = 1,2-dihexadecanoyl-sn-glycero-3-phosphocholine + CoA. It catalyses the reaction 1,2-dihexadecanoyl-sn-glycero-3-phosphocholine + H2O = 1-hexadecanoyl-sn-glycero-3-phosphocholine + hexadecanoate + H(+). In terms of biological role, thiol-specific peroxidase that catalyzes the reduction of hydrogen peroxide and organic hydroperoxides to water and alcohols, respectively. Can reduce H(2)O(2) and short chain organic, fatty acid, and phospholipid hydroperoxides. Also has phospholipase activity, and can therefore either reduce the oxidized sn-2 fatty acyl group of phospholipids (peroxidase activity) or hydrolyze the sn-2 ester bond of phospholipids (phospholipase activity). These activities are dependent on binding to phospholipids at acidic pH and to oxidized phospholipds at cytosolic pH. Plays a role in cell protection against oxidative stress by detoxifying peroxides and in phospholipid homeostasis. Exhibits acyl-CoA-dependent lysophospholipid acyltransferase which mediates the conversion of lysophosphatidylcholine (1-acyl-sn-glycero-3-phosphocholine or LPC) into phosphatidylcholine (1,2-diacyl-sn-glycero-3-phosphocholine or PC). Shows a clear preference for LPC as the lysophospholipid and for palmitoyl CoA as the fatty acyl substrate. The sequence is that of Peroxiredoxin-6 from Mesocricetus auratus (Golden hamster).